Here is a 203-residue protein sequence, read N- to C-terminus: Urease accessory protein UreG (203 aa).

11-18 is a binding site for GTP; the sequence is GPVGSGKT.

It belongs to the SIMIBI class G3E GTPase family. UreG subfamily. As to quaternary structure, homodimer. UreD, UreF and UreG form a complex that acts as a GTP-hydrolysis-dependent molecular chaperone, activating the urease apoprotein by helping to assemble the nickel containing metallocenter of UreC. The UreE protein probably delivers the nickel.

The protein localises to the cytoplasm. Functionally, facilitates the functional incorporation of the urease nickel metallocenter. This process requires GTP hydrolysis, probably effectuated by UreG. The protein is Urease accessory protein UreG of Prochlorococcus marinus (strain MIT 9312).